We begin with the raw amino-acid sequence, 174 residues long: Shikimate kinase 2 (174 aa).

12 to 17 (GCGKTT) lines the ATP pocket. Residues threonine 16 and aspartate 32 each coordinate Mg(2+). Residues aspartate 34, arginine 58, and glycine 79 each coordinate substrate. The interval 112 to 126 (RAYPEDDQRPSLTGK) is LID domain. Arginine 120 is an ATP binding site. Arginine 139 serves as a coordination point for substrate. ATP is bound at residue glutamine 155.

This sequence belongs to the shikimate kinase family. AroL subfamily. In terms of assembly, monomer. Mg(2+) is required as a cofactor.

It is found in the cytoplasm. It catalyses the reaction shikimate + ATP = 3-phosphoshikimate + ADP + H(+). The protein operates within metabolic intermediate biosynthesis; chorismate biosynthesis; chorismate from D-erythrose 4-phosphate and phosphoenolpyruvate: step 5/7. Its function is as follows. Catalyzes the specific phosphorylation of the 3-hydroxyl group of shikimic acid using ATP as a cosubstrate. This is Shikimate kinase 2 from Sodalis glossinidius (strain morsitans).